We begin with the raw amino-acid sequence, 289 residues long: Protein FraH (289 aa).

Residues 4-49 form a DZANK-type zinc finger; sequence CPNCNHPNPDGAVQCEACYTPLPATSNCPNCGATVQSDAAFCGQCG. A zinc finger spans residues 18 to 48; that stretch reads CEACYTPLPATSNCPNCGATVQSDAAFCGQC. Residues 204 to 260 enclose the FHA domain; the sequence is VHIGKPNDRIPPDVDVSGFANSEIVSRVHADIRLEGDAHYIEDVGSSNGTYINNLPL.

Functionally, putative heterocyst to vegetative cell connection. The protein is Protein FraH (fraH) of Nostoc sp. (strain PCC 7120 / SAG 25.82 / UTEX 2576).